We begin with the raw amino-acid sequence, 1070 residues long: Ubiquitin-protein ligase E3B (1070 aa).

N-acetylmethionine is present on Met1. An IQ domain is found at 29–58 (RERSAVTIQALVRSFLCRRRLHRDIRKEID). Phosphoserine is present on Ser421. One can recognise an HECT domain in the interval 704 to 1070 (SQHAMKGVIR…ISMNTGFELS (367 aa)). Cys1038 functions as the Glycyl thioester intermediate in the catalytic mechanism.

As to expression, widely expressed. High expression is observed in developing central nervous system.

The protein localises to the postsynaptic density. It catalyses the reaction S-ubiquitinyl-[E2 ubiquitin-conjugating enzyme]-L-cysteine + [acceptor protein]-L-lysine = [E2 ubiquitin-conjugating enzyme]-L-cysteine + N(6)-ubiquitinyl-[acceptor protein]-L-lysine.. Its pathway is protein modification; protein ubiquitination. Functionally, E3 ubiquitin-protein ligase which accepts ubiquitin from an E2 ubiquitin-conjugating enzyme in the form of a thioester and then directly transfers the ubiquitin to targeted substrates. Ubiquitinates BCKDK and targets it for degradation, thereby regulating various metabolic processes. Involved in the positive regulation of neurite branching in hippocampal neurons and the control of neuronal spine number and morphology, through the ubiquitination of PPP3CC. In Mus musculus (Mouse), this protein is Ubiquitin-protein ligase E3B (Ube3b).